The chain runs to 1343 residues: Protein cordon-bleu (1343 aa).

6 disordered regions span residues 1–51, 301–479, 522–613, 733–808, 1056–1077, and 1105–1148; these read MNLG…GDCK, KVEL…PAAE, VSVA…NGYE, IDKP…TRVL, EKPT…KSLD, and INNF…NVFG. Residues 20–30 show a composition bias toward pro residues; sequence APPPPRPPQPA. The short motif at 305 to 310 is the KKRRAP 1 element; the sequence is KKRRAP. Residues 324–335 are compositionally biased toward polar residues; sequence SQISLGSPSSHN. The KKRRAP 2 motif lies at 338–343; the sequence is KKRKAP. Over residues 343 to 354 the composition is skewed to pro residues; sequence PAPPPTPPPSTP. Basic and acidic residues predominate over residues 390–400; sequence DLSHSIEDSEP. Residues 406 to 422 are compositionally biased toward low complexity; it reads SSSSGDDAAAVGSSSSS. The span at 445-460 shows a compositional bias: basic and acidic residues; the sequence is PEPKPEYEPELKKEAS. Over residues 552 to 573 the composition is skewed to polar residues; that stretch reads ERMQSVSPMDIMSLNSDSTLPV. The segment covering 746-757 has biased composition (basic and acidic residues); it reads PSQDAKITDNME. Residues 773–789 are compositionally biased toward polar residues; sequence VELTSQKDTVLQKSQSF. Positions 1105–1122 are enriched in polar residues; it reads INNFPDTSSARQTPTDTT. Basic and acidic residues predominate over residues 1128-1137; it reads KKPELHKSEI. WH2 domains are found at residues 1167–1187 and 1207–1227; these read IHSS…LRKV and ERSA…LKKT. The interval 1246–1297 is disordered; that stretch reads NVHTEVISPRPTSPDFVPPLPPSFSPPPPPPPPLAPAKPPVVLPPGGNPEAA. A compositionally biased stretch (pro residues) spans 1261–1292; it reads FVPPLPPSFSPPPPPPPPLAPAKPPVVLPPGG. Positions 1297–1317 constitute a WH2 3 domain; the sequence is AREALLEAIRSGSGAQQLRKV.

As to quaternary structure, interacts with pacsin1.

It localises to the cell membrane. The protein resides in the cytoplasm. Its subcellular location is the cytoskeleton. The protein localises to the cell projection. It is found in the ruffle. It localises to the cytosol. Functionally, plays an important role in the reorganization of the actin cytoskeleton. Binds to and sequesters actin monomers (G actin). Nucleates actin polymerization by assembling three actin monomers in cross-filament orientation and thereby promotes growth of actin filaments at the barbed end. Can also mediate actin depolymerization at barbed ends and severing of actin filaments. Promotes formation of cell ruffles. Regulates neuron morphogenesis and increases branching of axons and dendrites. Required for normal embryonic development, including normal development of laterality, normal body size and shape, as well as normal brain, heart and kidney development. Required for normal development of stereocilia and kinocilia in sensory hair cells of neuromasts in the posterior lateral line organ, and thus also for balance keeping and normal swimming behavior. The sequence is that of Protein cordon-bleu (cobl) from Danio rerio (Zebrafish).